The chain runs to 153 residues: Large ribosomal subunit protein uL22 (153 aa).

Positions 128–153 (ADRRARRAAAKPAASASPAANEGVPA) are disordered. The span at 137–147 (AKPAASASPAA) shows a compositional bias: low complexity.

It belongs to the universal ribosomal protein uL22 family. As to quaternary structure, part of the 50S ribosomal subunit.

This protein binds specifically to 23S rRNA; its binding is stimulated by other ribosomal proteins, e.g. L4, L17, and L20. It is important during the early stages of 50S assembly. It makes multiple contacts with different domains of the 23S rRNA in the assembled 50S subunit and ribosome. Its function is as follows. The globular domain of the protein is located near the polypeptide exit tunnel on the outside of the subunit, while an extended beta-hairpin is found that lines the wall of the exit tunnel in the center of the 70S ribosome. This chain is Large ribosomal subunit protein uL22, found in Acidiphilium cryptum (strain JF-5).